We begin with the raw amino-acid sequence, 143 residues long: Submaxillary gland androgen-regulated protein 2, isoform delta (143 aa).

An N-terminal signal peptide occupies residues 1 to 22 (MKPLCLVFGLCVLIGCFLSSEC). Disordered regions lie at residues 28–52 (GQHD…PDPN) and 116–143 (VPRK…TDSF). Polar residues-rich tracts occupy residues 36–45 (LSPSNPSSHF) and 122–143 (NATP…TDSF).

The protein resides in the secreted. In terms of biological role, may play a role in protection or detoxification. The chain is Submaxillary gland androgen-regulated protein 2, isoform delta (Smr2) from Mus musculus (Mouse).